We begin with the raw amino-acid sequence, 352 residues long: Speedy protein E16 (352 aa).

Residues 1 to 90 (MDRTETRFRK…EPEKELAPEP (90 aa)) are disordered. A compositionally biased stretch (polar residues) spans 18–40 (ITTSRQPHPQNEQSPQRSTSGYS). A compositionally biased stretch (acidic residues) spans 76–90 (DESEEEPEKELAPEP).

It belongs to the Speedy/Ringo family.

The polypeptide is Speedy protein E16 (Homo sapiens (Human)).